A 434-amino-acid chain; its full sequence is Methylenetetrahydrofolate--tRNA-(uracil-5-)-methyltransferase TrmFO (434 aa).

10–15 provides a ligand contact to FAD; the sequence is GAGLAG.

Belongs to the MnmG family. TrmFO subfamily. FAD is required as a cofactor.

It is found in the cytoplasm. It catalyses the reaction uridine(54) in tRNA + (6R)-5,10-methylene-5,6,7,8-tetrahydrofolate + NADH + H(+) = 5-methyluridine(54) in tRNA + (6S)-5,6,7,8-tetrahydrofolate + NAD(+). The catalysed reaction is uridine(54) in tRNA + (6R)-5,10-methylene-5,6,7,8-tetrahydrofolate + NADPH + H(+) = 5-methyluridine(54) in tRNA + (6S)-5,6,7,8-tetrahydrofolate + NADP(+). In terms of biological role, catalyzes the folate-dependent formation of 5-methyl-uridine at position 54 (M-5-U54) in all tRNAs. The protein is Methylenetetrahydrofolate--tRNA-(uracil-5-)-methyltransferase TrmFO of Bacillus mycoides (strain KBAB4) (Bacillus weihenstephanensis).